A 439-amino-acid chain; its full sequence is Cysteine desulfurase-like protein ustD (439 aa).

The tract at residues 1 to 25 is disordered; sequence MKSVATSSLDDVDKDSVPLGSSING. Residues 120–121, Asn-206, and 255–257 contribute to the pyridoxal 5'-phosphate site; these read TT and SWY. The residue at position 258 (Lys-258) is an N6-(pyridoxal phosphate)lysine.

This sequence belongs to the class-V pyridoxal-phosphate-dependent aminotransferase family. It depends on pyridoxal 5'-phosphate as a cofactor.

It functions in the pathway mycotoxin biosynthesis. Its function is as follows. Cysteine desulfurase-like protein; part of the gene cluster that mediates the biosynthesis of the secondary metabolite ustiloxin B, an antimitotic tetrapeptide. First, ustA is processed by the subtilisin-like endoprotease Kex2 that is outside the ustiloxin B gene cluster, at the C-terminal side of Arg-Lys, after transfer to Golgi apparatus through the endoplasmic reticulum (ER). Cleavage by KEX2 generates 16 peptides YAIG-I to YAIG-XVI. To process the precursor peptide further, at least two peptidases are necessary to cleave the N-terminal and C-terminal sides of the Tyr-Ala-Ile-Gly core peptide which serves as backbone for the synthesis of ustiloxin B, through cyclization and modification of the tyrosine with a non-protein coding amino acid, norvaline. One of the two peptidases must be the serine peptidase ustP; and the other pepdidase is probably ustH. Macrocyclization of the core peptide derived from ustA requires the tyrosinase ustQ, as well as the homologous oxidases ustYa and ustYb, and leads to the production of the first cyclization product N-desmethylustiloxin F. For the formation of N-desmethylustiloxin F, three oxidation steps are required, hydroxylation at the benzylic position, hydroxylation at either the aromatic ring of Tyr or beta-position of Ile, and oxidative cyclization. UstQ may catalyze the oxidation of a phenol moiety, whereas the ustYa and ustYb are most likely responsible for the remaining two-step oxidations. N-desmethylustiloxin F is then methylated by ustM to yield ustiloxin F which in turn substrate of the cytochrome P450 monooxygenase ustC which catalyzes the formation of S-deoxyustiloxin H. The flavoprotein monooxygenases ustF1 and ustF2 then participate in the modification of the side chain of S-deoxyustiloxin H, leading to the synthesis of an oxime intermediate, via ustiloxin H. Finally, carboxylative dehydration performed by the cysteine desulfurase-like protein ustD yields ustiloxin B. In Aspergillus flavus (strain ATCC 200026 / FGSC A1120 / IAM 13836 / NRRL 3357 / JCM 12722 / SRRC 167), this protein is Cysteine desulfurase-like protein ustD.